Reading from the N-terminus, the 169-residue chain is Thermonuclease (169 aa).

A signal peptide spans 1–26 (MKKITTGLIIVVAAIIVLSIQFMTES). Residues arginine 65, glutamate 73, and arginine 115 contribute to the active site.

The protein belongs to the thermonuclease family. It depends on Ca(2+) as a cofactor.

It is found in the secreted. The catalysed reaction is Endonucleolytic cleavage to nucleoside 3'-phosphates and 3'-phosphooligonucleotide end-products.. Enzyme that catalyzes the hydrolysis of both DNA and RNA at the 5'-position of the phosphodiester bond. In Staphylococcus hyicus, this protein is Thermonuclease (nucH).